The primary structure comprises 860 residues: DNA mismatch repair protein MutS (860 aa).

607–614 (GPNMSGKS) contributes to the ATP binding site.

Belongs to the DNA mismatch repair MutS family.

Functionally, this protein is involved in the repair of mismatches in DNA. It is possible that it carries out the mismatch recognition step. This protein has a weak ATPase activity. The sequence is that of DNA mismatch repair protein MutS from Listeria monocytogenes serotype 4b (strain CLIP80459).